We begin with the raw amino-acid sequence, 162 residues long: Transcription antitermination protein RfaH (162 aa).

This sequence belongs to the RfaH family. As to quaternary structure, interacts with both the nontemplate DNA and the RNA polymerase (RNAP).

Functionally, enhances distal genes transcription elongation in a specialized subset of operons that encode extracytoplasmic components. RfaH is recruited into a multi-component RNA polymerase complex by the ops element, which is a short conserved DNA sequence located downstream of the main promoter of these operons. Once bound, RfaH suppresses pausing and inhibits Rho-dependent and intrinsic termination at a subset of sites. Termination signals are bypassed, which allows complete synthesis of long RNA chains. Also negatively controls expression and surface presentation of AG43 and possibly another AG43-independent factor that mediates cell-cell interactions and biofilm formation,. In Escherichia coli O6:K15:H31 (strain 536 / UPEC), this protein is Transcription antitermination protein RfaH.